The chain runs to 364 residues: Molybdenum import ATP-binding protein ModC (364 aa).

Residues 1–229 enclose the ABC transporter domain; the sequence is MLLIDIKKQL…PLMRPWLNAS (229 aa). ATP is bound at residue 31–38; the sequence is GRSGAGKS. The Mop domain maps to 293–360; sequence HSSIRNILPV…IKGVSVTQSD (68 aa).

The protein belongs to the ABC transporter superfamily. Molybdate importer (TC 3.A.1.8) family. As to quaternary structure, the complex is composed of two ATP-binding proteins (ModC), two transmembrane proteins (ModB) and a solute-binding protein (ModA).

It localises to the cell inner membrane. It catalyses the reaction molybdate(out) + ATP + H2O = molybdate(in) + ADP + phosphate + H(+). Its function is as follows. Part of the ABC transporter complex ModABC involved in molybdenum import. Responsible for energy coupling to the transport system. The protein is Molybdenum import ATP-binding protein ModC of Aliivibrio fischeri (strain ATCC 700601 / ES114) (Vibrio fischeri).